We begin with the raw amino-acid sequence, 229 residues long: Platelet-activating factor acetylhydrolase IB subunit alpha2 (229 aa).

Catalysis depends on residues Ser-48, Asp-193, and His-196.

The protein belongs to the 'GDSL' lipolytic enzyme family. Platelet-activating factor acetylhydrolase IB beta/gamma subunits subfamily. In terms of assembly, forms a catalytic dimer which is either homodimer (alpha2/alpha2 homodimer) or heterodimer with PAFAH1B3 (alpha2/alpha1 heterodimer). Component of the cytosolic (PAF-AH (I)) heterotetrameric enzyme, which is composed of PAFAH1B1 (beta), PAFAH1B2 (alpha2) and PAFAH1B3 (alpha1) subunits. The catalytic activity of the enzyme resides in the alpha1 (PAFAH1B3) and alpha2 (PAFAH1B2) subunits, whereas the beta subunit (PAFAH1B1) has regulatory activity. Trimer formation is not essential for the catalytic activity.

The protein localises to the cytoplasm. The catalysed reaction is a 1-O-alkyl-2-acetyl-sn-glycero-3-phosphocholine + H2O = a 1-O-alkyl-sn-glycero-3-phosphocholine + acetate + H(+). It catalyses the reaction 1-O-hexadecyl-2-acetyl-sn-glycero-3-phosphocholine + H2O = 1-O-hexadecyl-sn-glycero-3-phosphocholine + acetate + H(+). The enzyme catalyses 1-O-hexadecyl-2-acetyl-sn-glycero-3-phosphate + H2O = 1-O-hexadecyl-sn-glycero-3-phosphate + acetate + H(+). It carries out the reaction 1-O-hexadecyl-2-acetyl-sn-glycero-3-phosphoethanolamine + H2O = 1-O-hexadecyl-sn-glycero-3-phosphoethanolamine + acetate + H(+). Its function is as follows. Alpha2 catalytic subunit of the cytosolic type I platelet-activating factor (PAF) acetylhydrolase (PAF-AH (I)) heterotetrameric enzyme that catalyzes the hydrolyze of the acetyl group at the sn-2 position of PAF and its analogs and modulates the action of PAF. This Gallus gallus (Chicken) protein is Platelet-activating factor acetylhydrolase IB subunit alpha2 (PAFAH1B2).